The chain runs to 86 residues: Large ribosomal subunit protein eL20 (86 aa).

The protein belongs to the eukaryotic ribosomal protein eL20 family. As to quaternary structure, part of the 50S ribosomal subunit. Binds 23S rRNA.

In Saccharolobus solfataricus (strain ATCC 35092 / DSM 1617 / JCM 11322 / P2) (Sulfolobus solfataricus), this protein is Large ribosomal subunit protein eL20.